The sequence spans 552 residues: Carboxypeptidase Y homolog A (552 aa).

A signal peptide spans 1–17 (MRVLPATLLVGAATAAT). A propeptide spanning residues 18-133 (PAQQVLGGLQ…KLEAYDLRIK (116 aa)) is cleaved from the precursor. Disulfide bonds link C188–C428, C322–C336, C346–C369, C353–C362, and C391–C398. The N-linked (GlcNAc...) asparagine glycan is linked to N219. S275 is a catalytic residue. D467 is an active-site residue. A glycan (N-linked (GlcNAc...) asparagine) is linked at N518. Residue H529 is part of the active site.

The protein belongs to the peptidase S10 family.

It localises to the vacuole. The enzyme catalyses Release of a C-terminal amino acid with broad specificity.. In terms of biological role, vacuolar carboxypeptidase involved in degradation of small peptides. Digests preferentially peptides containing an aliphatic or hydrophobic residue in P1' position, as well as methionine, leucine or phenylalanine in P1 position of ester substrate. The polypeptide is Carboxypeptidase Y homolog A (cpyA) (Emericella nidulans (strain FGSC A4 / ATCC 38163 / CBS 112.46 / NRRL 194 / M139) (Aspergillus nidulans)).